Consider the following 351-residue polypeptide: D-threonate 4-phosphate dehydrogenase (351 aa).

Substrate-binding residues include His147 and Thr148. A divalent metal cation is bound by residues His177, His221, and His276. Residues Lys284, Asn293, and Arg302 each coordinate substrate.

This sequence belongs to the PdxA family. PdxA2 subfamily. As to quaternary structure, homodimer. It depends on a divalent metal cation as a cofactor.

The enzyme catalyses 4-O-phospho-D-threonate + NAD(+) = dihydroxyacetone phosphate + CO2 + NADH. Functionally, catalyzes the NAD-dependent oxidation and subsequent decarboxylation of D-threonate 4-phosphate to produce dihydroxyacetone phosphate (DHAP). Can also use 4-hydroxy-L-threonine 4-phosphate as substrate. The sequence is that of D-threonate 4-phosphate dehydrogenase from Bordetella bronchiseptica (strain ATCC BAA-588 / NCTC 13252 / RB50) (Alcaligenes bronchisepticus).